A 389-amino-acid chain; its full sequence is Large ribosomal subunit protein uL3 (389 aa).

The disordered stretch occupies residues 1–36; the sequence is MSHRKFEHPRHGSLGFLPRKRSSRHRGKVKSFPKDD. Basic residues predominate over residues 18–31; sequence PRKRSSRHRGKVKS.

Belongs to the universal ribosomal protein uL3 family.

Its subcellular location is the cytoplasm. The L3 protein is a component of the large subunit of cytoplasmic ribosomes. This chain is Large ribosomal subunit protein uL3 (RPL3), found in Oryza sativa subsp. japonica (Rice).